Reading from the N-terminus, the 521-residue chain is RING-type E3 ubiquitin-protein ligase PPIL2 (521 aa).

A U-box domain is found at 35–108 (RRLPFDHCSL…GQYHCPVLYS (74 aa)). The stretch at 197–217 (LKNTNSETRETLQELYKEFKG) forms a coiled coil. Lys-216 participates in a covalent cross-link: Glycyl lysine isopeptide (Lys-Gly) (interchain with G-Cter in SUMO2). In terms of domain architecture, PPIase cyclophilin-type spans 278-433 (KKGYVRLHTN…EEVLICTTTV (156 aa)). Over residues 447-462 (QERKKTQHQVDPEAKV) the composition is skewed to basic and acidic residues. Positions 447–521 (QERKKTQHQV…SRGFGDFSSW (75 aa)) are disordered. Residues 465 to 478 (SQPQPGNQGPQTYR) are compositionally biased toward polar residues. The residue at position 483 (Lys-483) is an N6-acetyllysine.

Belongs to the cyclophilin-type PPIase family. PPIL2 subfamily. In terms of assembly, component of the minor spliceosome, which splices U12-type introns. Within this complex, interacts with PRPF8/PRP8, EFTUD2/SNU114 and PLRG1. Interacts with isoform 2 of BSG. Interacts (via the PPIase cyclophilin-type domain) with CRNKL1; they may form a trimeric complex with HSP90.

The protein localises to the nucleus. It carries out the reaction S-ubiquitinyl-[E2 ubiquitin-conjugating enzyme]-L-cysteine + [acceptor protein]-L-lysine = [E2 ubiquitin-conjugating enzyme]-L-cysteine + N(6)-ubiquitinyl-[acceptor protein]-L-lysine.. Its pathway is protein modification; protein ubiquitination. Its function is as follows. Has a ubiquitin-protein ligase activity acting as an E3 ubiquitin protein ligase or as an ubiquitin-ubiquitin ligase promoting elongation of ubiquitin chains on substrates. By mediating 'Lys-48'-linked polyubiquitination of proteins could target them for proteasomal degradation. May also function as a chaperone, playing a role in transport to the cell membrane of BSG/Basigin for instance. Probable inactive PPIase with no peptidyl-prolyl cis-trans isomerase activity. As a component of the minor spliceosome, involved in the splicing of U12-type introns in pre-mRNAs. The sequence is that of RING-type E3 ubiquitin-protein ligase PPIL2 from Mus musculus (Mouse).